A 172-amino-acid polypeptide reads, in one-letter code: DCC family protein At1g52590, chloroplastic (172 aa).

Residues 1–25 (MAILIPASFGRLTITSRAQVRVRVS) constitute a chloroplast transit peptide.

This sequence belongs to the DCC thiol-disulfide oxidoreductase family.

The protein resides in the plastid. It localises to the chloroplast. In Arabidopsis thaliana (Mouse-ear cress), this protein is DCC family protein At1g52590, chloroplastic.